Reading from the N-terminus, the 322-residue chain is Ferrochelatase (322 aa).

Residues H194 and E275 each contribute to the Fe cation site.

This sequence belongs to the ferrochelatase family.

Its subcellular location is the cytoplasm. The catalysed reaction is heme b + 2 H(+) = protoporphyrin IX + Fe(2+). Its pathway is porphyrin-containing compound metabolism; protoheme biosynthesis; protoheme from protoporphyrin-IX: step 1/1. Functionally, catalyzes the ferrous insertion into protoporphyrin IX. This Yersinia enterocolitica serotype O:8 / biotype 1B (strain NCTC 13174 / 8081) protein is Ferrochelatase.